The sequence spans 901 residues: HTH-type transcriptional regulator MalT (901 aa).

39 to 46 contributes to the ATP binding site; it reads SPAGYGKT. Residues 829–894 enclose the HTH luxR-type domain; it reads ELIRTSPLTQ…AAVQHAQKLL (66 aa). The H-T-H motif DNA-binding region spans 853–872; the sequence is NEQIAGELEVAATTIKTHIR.

The protein belongs to the MalT family. Monomer in solution. Oligomerizes to an active state in the presence of the positive effectors ATP and maltotriose.

Its activity is regulated as follows. Activated by ATP and maltotriose, which are both required for DNA binding. In terms of biological role, positively regulates the transcription of the maltose regulon whose gene products are responsible for uptake and catabolism of malto-oligosaccharides. Specifically binds to the promoter region of its target genes, recognizing a short DNA motif called the MalT box. The protein is HTH-type transcriptional regulator MalT of Shigella flexneri serotype 5b (strain 8401).